A 128-amino-acid polypeptide reads, in one-letter code: Nucleoside diphosphate kinase B (128 aa).

Methionine 1 carries the post-translational modification N-acetylmethionine. Lysine 9, phenylalanine 39, threonine 70, arginine 81, and asparagine 91 together coordinate ATP. Histidine 94 acts as the Pros-phosphohistidine intermediate in catalysis.

It belongs to the NDK family. Requires Mg(2+) as cofactor.

It localises to the cytoplasm. It is found in the nucleus. The protein resides in the cell projection. The protein localises to the lamellipodium. Its subcellular location is the ruffle. The enzyme catalyses a 2'-deoxyribonucleoside 5'-diphosphate + ATP = a 2'-deoxyribonucleoside 5'-triphosphate + ADP. It carries out the reaction a ribonucleoside 5'-diphosphate + ATP = a ribonucleoside 5'-triphosphate + ADP. Functionally, major role in the synthesis of nucleoside triphosphates other than ATP. This chain is Nucleoside diphosphate kinase B (nme2), found in Merluccius australis australis (Austral hake).